A 129-amino-acid polypeptide reads, in one-letter code: Small ribosomal subunit protein uS11 (129 aa).

This sequence belongs to the universal ribosomal protein uS11 family. In terms of assembly, part of the 30S ribosomal subunit. Interacts with proteins S7 and S18. Binds to IF-3.

Its function is as follows. Located on the platform of the 30S subunit, it bridges several disparate RNA helices of the 16S rRNA. Forms part of the Shine-Dalgarno cleft in the 70S ribosome. The sequence is that of Small ribosomal subunit protein uS11 from Desulfovibrio desulfuricans (strain ATCC 27774 / DSM 6949 / MB).